We begin with the raw amino-acid sequence, 308 residues long: Acetyl-coenzyme A carboxylase carboxyl transferase subunit beta (308 aa).

Residues 26–295 enclose the CoA carboxyltransferase N-terminal domain; the sequence is LWIKDPETGE…EQKPLEPEIL (270 aa).

It belongs to the AccD/PCCB family. Acetyl-CoA carboxylase is a heterohexamer composed of biotin carboxyl carrier protein (AccB), biotin carboxylase (AccC) and two subunits each of ACCase subunit alpha (AccA) and ACCase subunit beta (AccD).

The protein resides in the cytoplasm. It carries out the reaction N(6)-carboxybiotinyl-L-lysyl-[protein] + acetyl-CoA = N(6)-biotinyl-L-lysyl-[protein] + malonyl-CoA. Its pathway is lipid metabolism; malonyl-CoA biosynthesis; malonyl-CoA from acetyl-CoA: step 1/1. Its function is as follows. Component of the acetyl coenzyme A carboxylase (ACC) complex. Biotin carboxylase (BC) catalyzes the carboxylation of biotin on its carrier protein (BCCP) and then the CO(2) group is transferred by the transcarboxylase to acetyl-CoA to form malonyl-CoA. This is Acetyl-coenzyme A carboxylase carboxyl transferase subunit beta from Mesorhizobium japonicum (strain LMG 29417 / CECT 9101 / MAFF 303099) (Mesorhizobium loti (strain MAFF 303099)).